Reading from the N-terminus, the 131-residue chain is Putative superoxide reductase (131 aa).

6 residues coordinate Fe cation: Glu15, His17, His45, His51, Cys115, and His118.

This sequence belongs to the desulfoferrodoxin family. It depends on Fe cation as a cofactor.

The catalysed reaction is reduced [rubredoxin] + superoxide + 2 H(+) = oxidized [rubredoxin] + H2O2. Its function is as follows. Uses electrons from reduced NADP, by way of rubredoxin and an oxidoreductase, to catalyze the reduction of superoxide to hydrogen peroxide. In Thermotoga maritima (strain ATCC 43589 / DSM 3109 / JCM 10099 / NBRC 100826 / MSB8), this protein is Putative superoxide reductase.